A 294-amino-acid polypeptide reads, in one-letter code: Taste receptor type 2 member 143 (294 aa).

At 1 to 7 the chain is on the extracellular side; that stretch reads MPSTPTL. The helical transmembrane segment at 8–28 threads the bilayer; it reads IFIVIFFLVSVASMLQNGFMI. Residues 29-43 lie on the Cytoplasmic side of the membrane; the sequence is IVLGREWMRNRALPA. The chain crosses the membrane as a helical span at residues 44-64; that stretch reads VDMIVASLASSRFCLHGIAIL. Residues 65–80 are Extracellular-facing; that stretch reads NNFLASFDFCYQANFV. A helical membrane pass occupies residues 81–101; sequence GILWDFINTLILWLTAWLAIF. Topologically, residues 102–128 are cytoplasmic; it reads YCVKISSFSHPVLFWLKWRISQLVPRL. Residues 129 to 149 form a helical membrane-spanning segment; that stretch reads LLVSLIMGGLSAIISATGNII. Topologically, residues 150–180 are extracellular; sequence ANQMIISQGFHGNCTFGHMSLDFYRYYYLSH. Asparagine 162 carries N-linked (GlcNAc...) asparagine glycosylation. A helical transmembrane segment spans residues 181 to 201; the sequence is AVLMWFTPFFLFLVSIIFLMF. Residues 202-227 are Cytoplasmic-facing; sequence SLYRHVEKMRGHRPGPWDPRTQAHTM. The helical transmembrane segment at 228-248 threads the bilayer; the sequence is ALKSLTVFITFYILFFLALII. Residues 249–260 lie on the Extracellular side of the membrane; the sequence is SSTKSKTMHSYW. The chain crosses the membrane as a helical span at residues 261-281; it reads YWVREIIIYTGIFLNSIILVL. The Cytoplasmic segment spans residues 282–294; that stretch reads SNPKLRKALKMRF.

This sequence belongs to the G-protein coupled receptor T2R family.

It is found in the membrane. Functionally, putative taste receptor which may play a role in the perception of bitterness. This chain is Taste receptor type 2 member 143, found in Rattus norvegicus (Rat).